Consider the following 129-residue polypeptide: Large ribosomal subunit protein bL12c (129 aa).

It belongs to the bacterial ribosomal protein bL12 family. Homodimer. Part of the ribosomal stalk of the 50S ribosomal subunit. Forms a multimeric L10(L12)X complex, where L10 forms an elongated spine to which 2 to 4 L12 dimers bind in a sequential fashion. Binds GTP-bound translation factors.

The protein resides in the plastid. The protein localises to the chloroplast. In terms of biological role, forms part of the ribosomal stalk which helps the ribosome interact with GTP-bound translation factors. Is thus essential for accurate translation. In Pyropia yezoensis (Susabi-nori), this protein is Large ribosomal subunit protein bL12c.